The primary structure comprises 403 residues: Phosphoglycerate kinase (403 aa).

Residues 22-24 (DFN), R37, 60-63 (HFGR), R119, and R152 each bind substrate. ATP-binding positions include K202, E324, and 354–357 (GGDT).

This sequence belongs to the phosphoglycerate kinase family. In terms of assembly, monomer.

Its subcellular location is the cytoplasm. The catalysed reaction is (2R)-3-phosphoglycerate + ATP = (2R)-3-phospho-glyceroyl phosphate + ADP. It participates in carbohydrate degradation; glycolysis; pyruvate from D-glyceraldehyde 3-phosphate: step 2/5. The protein is Phosphoglycerate kinase of Maricaulis maris (strain MCS10) (Caulobacter maris).